Reading from the N-terminus, the 257-residue chain is Zinc import ATP-binding protein ZnuC (257 aa).

One can recognise an ABC transporter domain in the interval 6–221; that stretch reads VRLEQITVAF…AFVETFGHQV (216 aa). 38–45 contacts ATP; it reads GPNGAGKT.

Belongs to the ABC transporter superfamily. Zinc importer (TC 3.A.1.15.5) family. As to quaternary structure, the complex is composed of two ATP-binding proteins (ZnuC), two transmembrane proteins (ZnuB) and a solute-binding protein (ZnuA).

Its subcellular location is the cell inner membrane. The catalysed reaction is Zn(2+)(out) + ATP(in) + H2O(in) = Zn(2+)(in) + ADP(in) + phosphate(in) + H(+)(in). Part of the ABC transporter complex ZnuABC involved in zinc import. Responsible for energy coupling to the transport system. The chain is Zinc import ATP-binding protein ZnuC from Marinobacter nauticus (strain ATCC 700491 / DSM 11845 / VT8) (Marinobacter aquaeolei).